We begin with the raw amino-acid sequence, 423 residues long: Galactosylceramide sulfotransferase (423 aa).

Residues 1-14 are Cytoplasmic-facing; the sequence is MLPPQKKPWESMAK. Residues 15-35 traverse the membrane as a helical; Signal-anchor for type II membrane protein segment; the sequence is GLVLGALFTSFLLLVYSYAVP. The Lumenal segment spans residues 36-423; sequence PLHAGLASTT…WKFIRDFLRW (388 aa). 2 N-linked (GlcNAc...) asparagine glycosylation sites follow: N66 and N312.

Belongs to the galactose-3-O-sulfotransferase family. As to expression, expressed in kidney proximal tubule, gastric mucosa and adenocarcinoma. Highly expressed in renal cell carcinoma cell lines.

Its subcellular location is the golgi apparatus membrane. It catalyses the reaction a beta-D-galactosyl-(1&lt;-&gt;1')-N-acylsphing-4-enine + 3'-phosphoadenylyl sulfate = an N-acyl-1-beta-D-(3-O-sulfo)-galactosyl-sphing-4-enine + adenosine 3',5'-bisphosphate + H(+). The catalysed reaction is a 1-O-alkyl-2-acyl-3-O-(beta-D-galactosyl)-sn-glycerol + 3'-phosphoadenylyl sulfate = a 1-O-alkyl-2-acyl-3-(beta-D-3-sulfogalactosyl)-sn-glycerol + adenosine 3',5'-bisphosphate + H(+). It carries out the reaction a beta-D-Gal-(1&lt;-&gt;1')-ceramide + 3'-phosphoadenylyl sulfate = 1-(3-O-sulfo-beta-D-galactosyl)-ceramide + adenosine 3',5'-bisphosphate + H(+). The enzyme catalyses a 1,2-diacyl-3-O-(beta-D-galactosyl)-sn-glycerol + 3'-phosphoadenylyl sulfate = 1,2-diacyl-3-(3-O-sulfo-beta-D-galactosyl)-sn-glycerol + adenosine 3',5'-bisphosphate + H(+). It catalyses the reaction a beta-D-Gal-(1-&gt;4)-beta-D-Glc-(1&lt;-&gt;1)-Cer(d18:1(4E)) + 3'-phosphoadenylyl sulfate = beta-D-3-sulfogalactosyl-(1-&gt;4)-beta-D-glucosyl-(1&lt;-&gt;1')-N-acylsphing-4-enine + adenosine 3',5'-bisphosphate + H(+). The protein operates within lipid metabolism; sphingolipid metabolism. Catalyzes the transfer of a sulfate group to position 3 of non-reducing beta-galactosyl residues in glycerolipids and sphingolipids, therefore participates in the biosynthesis of sulfoglycolipids. Catalyzes the synthesis of galactosylceramide sulfate (sulfatide), a major lipid component of the myelin sheath and of monogalactosylalkylacylglycerol sulfate (seminolipid), present in spermatocytes. Seems to prefer beta-glycosides at the non-reducing termini of sugar chains attached to a lipid moiety. Also acts on lactosylceramide, galactosyl 1-alkyl-2-sn-glycerol and galactosyl diacylglycerol (in vitro). This chain is Galactosylceramide sulfotransferase, found in Homo sapiens (Human).